The following is a 74-amino-acid chain: MNINSDYIVIKALEDGVNVIGLTRGADTRFHHSEKLDKGEVLIAQFTEHTSAIKVRGKAYIQTRHGEIESEGKK.

The protein belongs to the MtrB family. In terms of assembly, oligomer of 11 identical subunits arranged in doughnut-like structure.

Required for transcription attenuation control in the Trp operon. This trans-acting factor seems to recognize a 10 bases nucleotide sequence in the Trp leader transcript causing transcription termination. Binds the leader RNA only in presence of L-tryptophan. This is Transcription attenuation protein MtrB from Geobacillus sp. (strain WCH70).